Here is a 574-residue protein sequence, read N- to C-terminus: uncharacterized protein (574 aa).

The tract at residues 297–327 (STASKSKKRRKDEVSGAQRNSSPLPQDAVSS) is disordered. The segment covering 313–327 (AQRNSSPLPQDAVSS) has biased composition (polar residues).

This is an uncharacterized protein from Macaca fascicularis (Crab-eating macaque).